The following is a 396-amino-acid chain: KiSS-1 receptor (396 aa).

Residues 1–46 (MAAEATLGPNVSWWAPSNASGCPGCGVNASDGPGSAPRPLDAWLVP) lie on the Extracellular side of the membrane. N-linked (GlcNAc...) asparagine glycosylation is found at N10, N18, and N28. The chain crosses the membrane as a helical span at residues 47–67 (LFFAALMLLGLVGNSLVIFVI). The Cytoplasmic portion of the chain corresponds to 68 to 90 (CRHKHMQTVTNFYIANLAATDVT). The chain crosses the membrane as a helical span at residues 91–111 (FLLCCVPFTALLYPLPTWVLG). Topologically, residues 112 to 120 (DFMCKFVNY) are extracellular. A disulfide bond links C115 and C191. The chain crosses the membrane as a helical span at residues 121 to 138 (IQQVSVQATCATLTAMSV). The Cytoplasmic portion of the chain corresponds to 139–159 (DRWYVTVFPLRALHRRTPRLA). Residues 160–180 (LTVSLSIWVGSAAVSAPVLAL) form a helical membrane-spanning segment. At 181 to 202 (HRLSPGPHTYCSEAFPSRALER) the chain is on the extracellular side. The chain crosses the membrane as a helical span at residues 203 to 223 (AFALYNLLALYLLPLLATCAC). Over 224 to 264 (YGAMLRHLGRAAVRPAPTDGALQGQLLAQRAGAVRTKVSRL) the chain is Cytoplasmic. The chain crosses the membrane as a helical span at residues 265–285 (VAAVVLLFAACWGPIQLFLVL). Over 286–305 (QALGPSGAWHPRSYAAYALK) the chain is Extracellular. A helical membrane pass occupies residues 306 to 326 (IWAHCMSYSNSALNPLLYAFL). Topologically, residues 327–396 (GSHFRQAFCR…SVQDEHTAPL (70 aa)) are cytoplasmic. A disordered region spans residues 346–396 (RRPHASAHSDRAAPHSVPHSRAAHPVRVRTPEPGNPVRRSPSVQDEHTAPL).

This sequence belongs to the G-protein coupled receptor 1 family. As to expression, highest expression levels in the cerebrum and cecum. Moderate expression in the ovary, colon and placenta. Low levels in the uterus, small intestine, and thymus. Expressed only moderately in the placenta. No expression in kidney tissues. Has a complex and abundant central nervous system expression pattern. Expressed in brain regions such as pons, midbrain, thalamus, hypothalamus, hippocampus, amygdala, cortex, frontal cortex, and striatum. No expression in the cerebellum. Persistent expression is detected in hypothalamus throughout postnatal development, with maximum expression levels at puberty in both male and female. Hypothalamic expression changed throughout the estrus cycle and is significantly increased after gonadectomy, a rise that is prevented by sex steroid replacement both in males and females.

The protein localises to the cell membrane. Functionally, receptor for metastin, a C-terminally amidated peptide of KiSS1. KiSS1 is a metastasis suppressor protein. Activation of the receptor inhibits cell proliferation and cell migration, key characteristics of tumor metastasis. The receptor is essential for normal gonadotropin-released hormone physiology and for puberty. The hypothalamic KiSS1/KISS1R system is a pivotal factor in central regulation of the gonadotropic axis at puberty and in adulthood. Analysis of the transduction pathways activated by the receptor identifies coupling to phospholipase C and intracellular calcium release through pertussis toxin-insensitive G(q) proteins. In Rattus norvegicus (Rat), this protein is KiSS-1 receptor (Kiss1r).